The primary structure comprises 183 residues: Endoribonuclease YbeY (183 aa).

Residues His143, His147, and His153 each contribute to the Zn(2+) site.

It belongs to the endoribonuclease YbeY family. It depends on Zn(2+) as a cofactor.

Its subcellular location is the cytoplasm. Its function is as follows. Single strand-specific metallo-endoribonuclease involved in late-stage 70S ribosome quality control and in maturation of the 3' terminus of the 16S rRNA. The sequence is that of Endoribonuclease YbeY from Rickettsia bellii (strain OSU 85-389).